Consider the following 561-residue polypeptide: PR domain zinc finger protein 14 (561 aa).

A disordered region spans residues 1–20; the sequence is MALPPSGETQSQDKANYLPQ. Polar residues predominate over residues 7–20; sequence GETQSQDKANYLPQ. Residues 184 to 373 are interaction with CBFA2T2; the sequence is GFNFTEEELS…GVPMNLRVTE (190 aa). One can recognise an SET domain in the interval 241-356; that stretch reads EGLCLMQTSF…RNQELLVWYG (116 aa). Tyrosine 355 serves as a coordination point for S-adenosyl-L-methionine. A C2H2-type 1; atypical zinc finger spans residues 390-416; it reads YRCERCGKVFTYKYYRDKHLKYTPCVD. 5 C2H2-type zinc fingers span residues 422–445, 451–473, 479–501, 507–530, and 536–558; these read FPCS…LHVH, YLCS…MRVH, YQCV…IRQH, FKCK…RRSH, and SSCD…MRLH.

Belongs to the class V-like SAM-binding methyltransferase superfamily. As to quaternary structure, interacts with CBFA2T2. Restricted to embryonic stem cells and primordial germ cells. Not detected in epiblast-derived stem cells.

It localises to the nucleus. In terms of biological role, transcription factor that has both positive and negative roles on transcription. Plays a role in cellular pluripotency. Essential for germ cell development at 2 levels: the reacquisition of potential pluripotency, including SOX2 up-regulation, and successful epigenetic reprogramming, characterized by EHMT1 repression. Its association with CBFA2T2 is required for the functions in pluripotency and germ cell formation. The sequence is that of PR domain zinc finger protein 14 (Prdm14) from Mus musculus (Mouse).